The primary structure comprises 115 residues: Type 3 secretion system chaperone YscG (115 aa).

It belongs to the YscG family. In terms of assembly, component of the heterodimeric YscE-YscG chaperone. The YscE-YscG chaperone forms a stable ternary complex with YscF/SctF.

Its subcellular location is the cytoplasm. In terms of biological role, chaperone of the type III secretion system (T3SS), also called injectisome, which is used to inject bacterial effector proteins into eukaryotic host cells. Along with YscE, prevents premature polymerization of the YscF/SctF needle protein within the cytoplasm. Required for Yop secretion. The sequence is that of Type 3 secretion system chaperone YscG from Yersinia enterocolitica.